The chain runs to 313 residues: Beta-ketoacyl-[acyl-carrier-protein] synthase III (313 aa).

Residues Cys-112 and His-238 contribute to the active site. Positions Gln-239 to Arg-243 are ACP-binding. The active site involves Asn-268.

The protein belongs to the thiolase-like superfamily. FabH family. Homodimer.

The protein localises to the cytoplasm. The catalysed reaction is malonyl-[ACP] + acetyl-CoA + H(+) = 3-oxobutanoyl-[ACP] + CO2 + CoA. It functions in the pathway lipid metabolism; fatty acid biosynthesis. Functionally, catalyzes the condensation reaction of fatty acid synthesis by the addition to an acyl acceptor of two carbons from malonyl-ACP. Catalyzes the first condensation reaction which initiates fatty acid synthesis and may therefore play a role in governing the total rate of fatty acid production. Possesses both acetoacetyl-ACP synthase and acetyl transacylase activities. Its substrate specificity determines the biosynthesis of branched-chain and/or straight-chain of fatty acids. The chain is Beta-ketoacyl-[acyl-carrier-protein] synthase III from Staphylococcus saprophyticus subsp. saprophyticus (strain ATCC 15305 / DSM 20229 / NCIMB 8711 / NCTC 7292 / S-41).